The chain runs to 177 residues: CDP-archaeol synthase (177 aa).

The next 5 membrane-spanning stretches (helical) occupy residues 6–26 (LFAS…ACIF), 54–74 (CIFG…LVDF), 90–110 (VILA…GSFI), 124–144 (LLDQ…VAPI), and 148–168 (MIII…IIAY).

It belongs to the CDP-archaeol synthase family. It depends on Mg(2+) as a cofactor.

It localises to the cell membrane. It carries out the reaction 2,3-bis-O-(geranylgeranyl)-sn-glycerol 1-phosphate + CTP + H(+) = CDP-2,3-bis-O-(geranylgeranyl)-sn-glycerol + diphosphate. Its pathway is membrane lipid metabolism; glycerophospholipid metabolism. Functionally, catalyzes the formation of CDP-2,3-bis-(O-geranylgeranyl)-sn-glycerol (CDP-archaeol) from 2,3-bis-(O-geranylgeranyl)-sn-glycerol 1-phosphate (DGGGP) and CTP. This reaction is the third ether-bond-formation step in the biosynthesis of archaeal membrane lipids. This Methanocaldococcus jannaschii (strain ATCC 43067 / DSM 2661 / JAL-1 / JCM 10045 / NBRC 100440) (Methanococcus jannaschii) protein is CDP-archaeol synthase.